Reading from the N-terminus, the 450-residue chain is Probable glycylpeptide N-tetradecanoyltransferase (450 aa).

The disordered stretch occupies residues 1–28; sequence MSHGHSHDGAPCGGHHGDDGAGGSRPSV. The tetradecanoyl-CoA site is built by Gln-67, Phe-68, Trp-69, Phe-200, Leu-201, Cys-202, Val-203, Ser-209, Arg-211, Val-212, and Ala-213.

Belongs to the NMT family.

It localises to the cytoplasm. The enzyme catalyses N-terminal glycyl-[protein] + tetradecanoyl-CoA = N-tetradecanoylglycyl-[protein] + CoA + H(+). Adds a myristoyl group to the N-terminal glycine residue of certain cellular proteins. This Caenorhabditis elegans protein is Probable glycylpeptide N-tetradecanoyltransferase (nmt-1).